The primary structure comprises 212 residues: Large ribosomal subunit protein uL3 (212 aa).

Glutamine 152 is subject to N5-methylglutamine.

The protein belongs to the universal ribosomal protein uL3 family. In terms of assembly, part of the 50S ribosomal subunit. Forms a cluster with proteins L14 and L19. Post-translationally, methylated by PrmB.

One of the primary rRNA binding proteins, it binds directly near the 3'-end of the 23S rRNA, where it nucleates assembly of the 50S subunit. This Marinomonas sp. (strain MWYL1) protein is Large ribosomal subunit protein uL3.